The following is a 33-amino-acid chain: NAD-reducing hydrogenase HoxS subunit gamma (33 aa).

Residues 1-33 (SIEIEIDGVTVTTEESRTLVDVAAEAGVYIPTL) form the 2Fe-2S ferredoxin-type domain.

Belongs to the complex I 75 kDa subunit family. Tetramer of an alpha and a gamma subunits (flavin-containing dimer), and a delta and a nickel-containing beta subunits (hydrogenase dimer). It depends on [4Fe-4S] cluster as a cofactor.

Its subcellular location is the cytoplasm. It catalyses the reaction H2 + NAD(+) = NADH + H(+). In terms of biological role, subunits alpha and gamma of HoxS constitute an NADH--oxidoreductase. The protein is NAD-reducing hydrogenase HoxS subunit gamma (hoxU) of Rhodococcus opacus (Nocardia opaca).